Reading from the N-terminus, the 499-residue chain is Glycerol kinase (499 aa).

Thr-12 lines the ADP pocket. Residues Thr-12, Thr-13, and Ser-14 each coordinate ATP. Thr-12 is a binding site for sn-glycerol 3-phosphate. Arg-16 is an ADP binding site. Arg-82, Glu-83, Tyr-134, and Asp-240 together coordinate sn-glycerol 3-phosphate. The glycerol site is built by Arg-82, Glu-83, Tyr-134, Asp-240, and Gln-241. Thr-262 and Gly-306 together coordinate ADP. ATP-binding residues include Thr-262, Gly-306, Gln-310, and Gly-412. ADP contacts are provided by Gly-412 and Asn-416.

The protein belongs to the FGGY kinase family.

It catalyses the reaction glycerol + ATP = sn-glycerol 3-phosphate + ADP + H(+). Its pathway is polyol metabolism; glycerol degradation via glycerol kinase pathway; sn-glycerol 3-phosphate from glycerol: step 1/1. Its activity is regulated as follows. Inhibited by fructose 1,6-bisphosphate (FBP). Its function is as follows. Key enzyme in the regulation of glycerol uptake and metabolism. Catalyzes the phosphorylation of glycerol to yield sn-glycerol 3-phosphate. This Nocardia farcinica (strain IFM 10152) protein is Glycerol kinase.